The chain runs to 447 residues: MTRLFGTDGVRGLANRKLTALLALKLGAAAAEVLTKDNRSTSRRPVAVVGRDPRVSGEMLAAALSAGMASRGVDVLRVGVLPTPAVAYLTDFYGADMGVVISASHNPMPDNGIKFFSKGGHKLPDSVEDEIEKVMETIPDGGPTGHGIGRVIEEAVDAQETYLKHLKGAVPRSLEGITVVVDCANGAASEVAPLAYAAAGAKVIPIHNHPNAYNINDSCGSTHIDQVQAAVLEHGADLGLAHDGDADRCLAVDAEGNVVDGDQIMAILALAMKENGELHKSTLVATVMSNLGLRLAMKEAGIELRTTKVGDRYVLEELNAGGFSLGGEQSGHIVLPDHGTTGDGTLTGLSLMSRMAETGLSLKVLASAMTVLPQVLINVPVSDKTIIQTHPDVVAAMERASDELGEDGRVLLRPSGTEELFRVMVEAPSKETARRIAADLASVVAKI.

Residue S104 is the Phosphoserine intermediate of the active site. 4 residues coordinate Mg(2+): S104, D243, D245, and D247. S104 is subject to Phosphoserine.

This sequence belongs to the phosphohexose mutase family. Requires Mg(2+) as cofactor. Activated by phosphorylation.

The catalysed reaction is alpha-D-glucosamine 1-phosphate = D-glucosamine 6-phosphate. Catalyzes the conversion of glucosamine-6-phosphate to glucosamine-1-phosphate. The protein is Phosphoglucosamine mutase of Corynebacterium diphtheriae (strain ATCC 700971 / NCTC 13129 / Biotype gravis).